The chain runs to 395 residues: Biotin biosynthesis cytochrome P450 (395 aa).

Residue arginine 60 participates in substrate binding. Histidine 89–arginine 93 provides a ligand contact to heme. Isoleucine 169 to arginine 173 provides a ligand contact to substrate. An intrachain disulfide couples cysteine 250 to cysteine 275. A heme-binding site is contributed by threonine 285 to arginine 287. Residue tyrosine 307 coordinates substrate. Heme contacts are provided by residues histidine 343–cysteine 345 and cysteine 345.

Requires heme as cofactor.

It carries out the reaction a C2-C8-saturated long-chain fatty acyl-[ACP] + 2 reduced [flavodoxin] + 3 O2 = 6-carboxyhexanoyl-[ACP] + a fatty aldehyde + 2 oxidized [flavodoxin] + 3 H2O + 3 H(+). It functions in the pathway cofactor biosynthesis; biotin biosynthesis. Catalyzes the C-C bond cleavage of fatty acid linked to acyl carrier protein (ACP) to generate pimelic acid for biotin biosynthesis. It has high affinity for long-chain fatty acids with the greatest affinity for myristic acid. The chain is Biotin biosynthesis cytochrome P450 (bioI) from Bacillus subtilis (strain 168).